The chain runs to 1441 residues: MSIAIPLGVTTPDTSYSDMAAGSDPESVEASPAVNEKSVYSTHNYGTTQRHGCRGLPYATIIPRSDLNGLPSPVEERCGDSPNSEGETVPTWCPCGLSQDGFLLNCDKCRGMSRGKVIRLHRRKQDNISGGDSSATESWDEELSPSTVLYTATQHTPTSITLTVRRTKPKKRKKSPEKGRAAPKTKKIKNSPSEAQNLDENTTEGWENRIRLWTDQYEEAFTNQYSADVQNALEQHLHSNKEFVGKPAILDTINKTELACNNTVIGSQMQLQLGRVTRVQKHRKILRAARDLALDTLIIEYRGKVMLRQQFEVNGHFFKKPYPFVLFYSKFNGVEMCVDARTFGNDARFIRRSCTPNAEVRHMIADGMIHLCIYAVSAITKDAEVTIAFDYEYSNCNYKVDCACHKGNRNCPIQKRNPNAAELPLPPPPSFPTIGAETRRRKARRKELELEQQNEVPEENPDPQPQEVPEKVTVSNEHEEVDNPEEKPEEEEKEEATDDQENSAHSRRTREDRKVEAIMHAFESLEKRKKRRDQPVEQSSSDIEITTSSSEIVVGEETKTAAPESEVSSPVSNVAIPSTPQSTGVNTRRSSHAGDVAAEKPIPKPPPAKPSRPRPKSRISRYRTSSAQRLKRQKQAIAQQAELSQAALEEGGSNNSVTPPEAGNTDSSGENRQLTGSDPTVISVTGSHVNRAASKYPKTKKYLVTEWLNDKAEKQECPVECPLRITTDPTVLATTLNMLPGLIHSPLICTTPKHYIRFGSPFMPERRRRPLLPDGTFSSCKKRWIKQALEEGMTQTSSVPQETRTQHLYQSNETSNSSSICKDNADLLSPLKKWKSRYLMEQNITKLLQPLSPVTPPPPSSGSKSPQLTTPGQTHPGEEECRNGYSLMFSPITSLTTASRSNTPLQFELCHRKDLDLTKVGFPDSSTHSCADRPSLLNCNHPDLASHPSVVPTSEAGFPSRSGDGPQTLLRNSDQAFRTEFNLMYAYSPLNAMPRADGLYRGSPLVGDRKPLHLDGGYCSPAEGFSSRYEHGFMKDLSRGSMSPGGERTCEGVPSAPQNPPQRKKVSLLEYRKRKQEAKENSGGGNDSSQSKSKSSGAGQGSSNSVSDTGAHGVQGSSAGTPSSPHKKFSPSHSSASHLEAVSPSDSRGTSSSHCRPQENISSRWMVPTSVERLREGGSIPKVLRSSVRVAQKGEPSPTWESNITEKESDPADGEGPEPLSSALSKGATVYSPSRYSYQLLQCDSPRTESQSLLQQSSSPFRGHPTQSPGYSYRTTALRPGNPPSHGSSESSLSSTSYPSPAHPVSTDSLAPFTGTPGYYSSQPHSGNSTGSNLPRRSCSSSAASPTPQGPSDSPTSDSVSQSSTGTLSSTSFPQNSRSSLPSDLRTISLPNAGQSAAYQASRVSAVSNSQHYPHRGSGGVHQYRLQPLQGSGVKTQTGLS.

Residues 1-28 (MSIAIPLGVTTPDTSYSDMAAGSDPESV) form a disordered region. At Leu-70 the chain carries Phosphothreonine. Phosphoserine is present on residues Ser-72 and Val-74. Residues 156 to 202 (TPTSITLTVRRTKPKKRKKSPEKGRAAPKTKKIKNSPSEAQNLDENT) form a disordered region. Residues 165–189 (RRTKPKKRKKSPEKGRAAPKTKKIK) are compositionally biased toward basic residues. Over residues 190 to 202 (NSPSEAQNLDENT) the composition is skewed to polar residues. In terms of domain architecture, SET spans 269 to 390 (MQLQLGRVTR…KDAEVTIAFD (122 aa)). 2 disordered regions span residues 417–683 (NPNA…TVIS) and 793–816 (MTQTSSVPQETRTQHLYQSNETSN). 2 stretches are compositionally biased toward acidic residues: residues 450–461 (LEQQNEVPEENP) and 479–501 (EEVDNPEEKPEEEEKEEATDDQE). 2 stretches are compositionally biased toward low complexity: residues 539-552 (SSSDIEITTSSSEI) and 561-572 (AAPESEVSSPVS). Over residues 575–588 (AIPSTPQSTGVNTR) the composition is skewed to polar residues. Residues 611 to 621 (SRPRPKSRISR) show a composition bias toward basic residues. Residues 635–650 (QAIAQQAELSQAALEE) are compositionally biased toward low complexity. Residues 652–683 (GSNNSVTPPEAGNTDSSGENRQLTGSDPTVIS) show a composition bias toward polar residues. Phosphoserine occurs at positions 829 and 852. 3 disordered regions span residues 849–883 (QPLSPVTPPPPSSGSKSPQLTTPGQTHPGEEECRN), 1036–1228 (DLSR…SKGA), and 1243–1441 (CDSP…TGLS). A Phosphothreonine modification is found at Thr-855. The segment covering 1062 to 1076 (QRKKVSLLEYRKRKQ) has biased composition (basic residues). A compositionally biased stretch (low complexity) spans 1087 to 1107 (DSSQSKSKSSGAGQGSSNSVS). Over residues 1144–1163 (PSDSRGTSSSHCRPQENISS) the composition is skewed to polar residues. Ser-1197 carries the phosphoserine modification. A compositionally biased stretch (low complexity) spans 1250–1259 (SQSLLQQSSS). Residues 1265–1275 (PTQSPGYSYRT) are compositionally biased toward polar residues. Residues 1284–1300 (PSHGSSESSLSSTSYPS) show a composition bias toward low complexity. Positions 1319-1333 (YYSSQPHSGNSTGSN) are enriched in polar residues. The segment covering 1335–1372 (PRRSCSSSAASPTPQGPSDSPTSDSVSQSSTGTLSSTS) has biased composition (low complexity). 3 stretches are compositionally biased toward polar residues: residues 1373–1382 (FPQNSRSSLP), 1389–1412 (SLPNAGQSAAYQASRVSAVSNSQH), and 1429–1441 (LQGSGVKTQTGLS).

Interacts with components of the PAF1 complex (PAF1C) such as LEO1, CTR9 and CDC73. Interacts with NCOR1. Interacts with HDAC3. In terms of tissue distribution, ubiquitously expressed.

It localises to the nucleus. It is found in the chromosome. The catalysed reaction is L-lysyl(9)-[histone H3] + S-adenosyl-L-methionine = N(6)-methyl-L-lysyl(9)-[histone H3] + S-adenosyl-L-homocysteine + H(+). The enzyme catalyses L-lysyl(36)-[histone H3] + 3 S-adenosyl-L-methionine = N(6),N(6),N(6)-trimethyl-L-lysyl(36)-[histone H3] + 3 S-adenosyl-L-homocysteine + 3 H(+). Chromatin regulator required for brain development: acts as a regulator of RNA elongation rate, thereby regulating neural stem cell (NSC) proliferation and synaptic transmission. May act by mediating trimethylation of 'Lys-36' of histone H3 (H3K36me3), which is essential to allow on-time RNA elongation dynamics. Also monomethylates 'Lys-9' of histone H3 (H3K9me1) in vitro. The relevance of histone methyltransferase activity is however subject to discussion. The sequence is that of Histone-lysine N-methyltransferase SETD5 from Mus musculus (Mouse).